The chain runs to 203 residues: Meiotically up-regulated protein PB17E12.09 (203 aa).

Positions 92-177 (CNRKIEGYIK…KEMQLYMTKI (86 aa)) form a coiled coil.

It is found in the cytoplasm. In terms of biological role, has a role in meiosis and sporulation. This Schizosaccharomyces pombe (strain 972 / ATCC 24843) (Fission yeast) protein is Meiotically up-regulated protein PB17E12.09.